Reading from the N-terminus, the 207-residue chain is Ribonuclease HII (207 aa).

Residues 19-207 (HCIAGVDEVG…PVKKALGIEE (189 aa)) enclose the RNase H type-2 domain. 3 residues coordinate a divalent metal cation: Asp-25, Glu-26, and Asp-117.

It belongs to the RNase HII family. The cofactor is Mn(2+). Requires Mg(2+) as cofactor.

It is found in the cytoplasm. The enzyme catalyses Endonucleolytic cleavage to 5'-phosphomonoester.. Functionally, endonuclease that specifically degrades the RNA of RNA-DNA hybrids. The sequence is that of Ribonuclease HII from Vibrio vulnificus (strain CMCP6).